The sequence spans 285 residues: 1,4-dihydroxy-2-naphthoyl-CoA synthase (285 aa).

Residues arginine 45, 84–88 (AGGDQ), tyrosine 97, 129–133 (YSIGG), threonine 155, serine 161, tyrosine 258, and lysine 273 contribute to the substrate site. Hydrogencarbonate is bound at residue 154–156 (QTG).

The protein belongs to the enoyl-CoA hydratase/isomerase family. MenB subfamily. In terms of assembly, homohexamer. Hydrogencarbonate serves as cofactor.

The enzyme catalyses 2-succinylbenzoyl-CoA + H(+) = 1,4-dihydroxy-2-naphthoyl-CoA + H2O. It functions in the pathway quinol/quinone metabolism; 1,4-dihydroxy-2-naphthoate biosynthesis; 1,4-dihydroxy-2-naphthoate from chorismate: step 6/7. The protein operates within quinol/quinone metabolism; menaquinone biosynthesis. Converts o-succinylbenzoyl-CoA (OSB-CoA) to 1,4-dihydroxy-2-naphthoyl-CoA (DHNA-CoA). In Salmonella typhimurium (strain LT2 / SGSC1412 / ATCC 700720), this protein is 1,4-dihydroxy-2-naphthoyl-CoA synthase.